The sequence spans 271 residues: Tryptophan synthase alpha chain (271 aa).

Active-site proton acceptor residues include Glu49 and Asp60.

The protein belongs to the TrpA family. Tetramer of two alpha and two beta chains.

The enzyme catalyses (1S,2R)-1-C-(indol-3-yl)glycerol 3-phosphate + L-serine = D-glyceraldehyde 3-phosphate + L-tryptophan + H2O. It participates in amino-acid biosynthesis; L-tryptophan biosynthesis; L-tryptophan from chorismate: step 5/5. The alpha subunit is responsible for the aldol cleavage of indoleglycerol phosphate to indole and glyceraldehyde 3-phosphate. The protein is Tryptophan synthase alpha chain of Burkholderia lata (strain ATCC 17760 / DSM 23089 / LMG 22485 / NCIMB 9086 / R18194 / 383).